Here is a 478-residue protein sequence, read N- to C-terminus: ATP synthase subunit beta (478 aa).

Position 152–159 (152–159) interacts with ATP; the sequence is GGAGVGKT.

This sequence belongs to the ATPase alpha/beta chains family. In terms of assembly, F-type ATPases have 2 components, CF(1) - the catalytic core - and CF(0) - the membrane proton channel. CF(1) has five subunits: alpha(3), beta(3), gamma(1), delta(1), epsilon(1). CF(0) has three main subunits: a(1), b(2) and c(9-12). The alpha and beta chains form an alternating ring which encloses part of the gamma chain. CF(1) is attached to CF(0) by a central stalk formed by the gamma and epsilon chains, while a peripheral stalk is formed by the delta and b chains.

It is found in the cell membrane. It catalyses the reaction ATP + H2O + 4 H(+)(in) = ADP + phosphate + 5 H(+)(out). Produces ATP from ADP in the presence of a proton gradient across the membrane. The catalytic sites are hosted primarily by the beta subunits. This is ATP synthase subunit beta from Wolbachia pipientis subsp. Culex pipiens (strain wPip).